Reading from the N-terminus, the 376-residue chain is uncharacterized protein (376 aa).

2 stretches are compositionally biased toward low complexity: residues 73-99 (NNSI…NNNN) and 228-243 (SSFS…TVSS). Disordered stretches follow at residues 73–100 (NNSI…NNNL) and 222–269 (EQDP…KISD).

This is an uncharacterized protein from Saccharomyces cerevisiae (strain ATCC 204508 / S288c) (Baker's yeast).